An 86-amino-acid chain; its full sequence is Small ribosomal subunit protein bS18 (86 aa).

The protein belongs to the bacterial ribosomal protein bS18 family. Part of the 30S ribosomal subunit. Forms a tight heterodimer with protein bS6.

In terms of biological role, binds as a heterodimer with protein bS6 to the central domain of the 16S rRNA, where it helps stabilize the platform of the 30S subunit. The polypeptide is Small ribosomal subunit protein bS18 (Campylobacter jejuni subsp. jejuni serotype O:6 (strain 81116 / NCTC 11828)).